The primary structure comprises 444 residues: Bifunctional protein GlmU (444 aa).

The tract at residues 1 to 226 (MTDSTHRTTA…EAELAGVNSR (226 aa)) is pyrophosphorylase. UDP-N-acetyl-alpha-D-glucosamine contacts are provided by residues 13 to 16 (LAAG), K27, Q75, and 80 to 81 (GT). D103 is a binding site for Mg(2+). UDP-N-acetyl-alpha-D-glucosamine contacts are provided by G139, E153, N168, and N224. Position 224 (N224) interacts with Mg(2+). The segment at 227–247 (SELARAEATLQTRLRNAAMDA) is linker. The interval 248–444 (GVTLVAPETV…QSLKARKEQG (197 aa)) is N-acetyltransferase. Positions 313 and 331 each coordinate UDP-N-acetyl-alpha-D-glucosamine. Residue H343 is the Proton acceptor of the active site. The UDP-N-acetyl-alpha-D-glucosamine site is built by Y346 and N357. Acetyl-CoA-binding positions include A360, 366-367 (NY), S385, A403, and R420.

This sequence in the N-terminal section; belongs to the N-acetylglucosamine-1-phosphate uridyltransferase family. It in the C-terminal section; belongs to the transferase hexapeptide repeat family. As to quaternary structure, homotrimer. It depends on Mg(2+) as a cofactor.

Its subcellular location is the cytoplasm. The enzyme catalyses alpha-D-glucosamine 1-phosphate + acetyl-CoA = N-acetyl-alpha-D-glucosamine 1-phosphate + CoA + H(+). It catalyses the reaction N-acetyl-alpha-D-glucosamine 1-phosphate + UTP + H(+) = UDP-N-acetyl-alpha-D-glucosamine + diphosphate. It participates in nucleotide-sugar biosynthesis; UDP-N-acetyl-alpha-D-glucosamine biosynthesis; N-acetyl-alpha-D-glucosamine 1-phosphate from alpha-D-glucosamine 6-phosphate (route II): step 2/2. It functions in the pathway nucleotide-sugar biosynthesis; UDP-N-acetyl-alpha-D-glucosamine biosynthesis; UDP-N-acetyl-alpha-D-glucosamine from N-acetyl-alpha-D-glucosamine 1-phosphate: step 1/1. Its pathway is bacterial outer membrane biogenesis; LPS lipid A biosynthesis. Functionally, catalyzes the last two sequential reactions in the de novo biosynthetic pathway for UDP-N-acetylglucosamine (UDP-GlcNAc). The C-terminal domain catalyzes the transfer of acetyl group from acetyl coenzyme A to glucosamine-1-phosphate (GlcN-1-P) to produce N-acetylglucosamine-1-phosphate (GlcNAc-1-P), which is converted into UDP-GlcNAc by the transfer of uridine 5-monophosphate (from uridine 5-triphosphate), a reaction catalyzed by the N-terminal domain. This chain is Bifunctional protein GlmU, found in Gluconobacter oxydans (strain 621H) (Gluconobacter suboxydans).